Consider the following 222-residue polypeptide: uncharacterized protein (222 aa).

Residues 142–222 (ARRGGCVHPP…LPDPPSAGHL (81 aa)) are disordered. The segment covering 160 to 169 (QSRSISSRRA) has biased composition (low complexity). The span at 182–196 (PRRRPHRHRTRPQTR) shows a compositional bias: basic residues.

Belongs to the Rv1128c/1148c/1588c/1702c/1945/3466 family.

This is an uncharacterized protein from Mycobacterium tuberculosis (strain CDC 1551 / Oshkosh).